Consider the following 37-residue polypeptide: Large ribosomal subunit protein bL36 (37 aa).

The protein belongs to the bacterial ribosomal protein bL36 family.

The polypeptide is Large ribosomal subunit protein bL36 (Trichlorobacter lovleyi (strain ATCC BAA-1151 / DSM 17278 / SZ) (Geobacter lovleyi)).